Here is a 201-residue protein sequence, read N- to C-terminus: DNA polymerase epsilon subunit C (201 aa).

Disordered regions lie at residues Lys-102–Arg-165 and Ser-178–Pro-201. The segment covering Val-117–Glu-144 has biased composition (acidic residues). Basic and acidic residues-rich tracts occupy residues Pro-145–Thr-164 and Val-182–Pro-201. Phosphoserine is present on residues Ser-186, Ser-188, and Ser-189.

In terms of assembly, DNA polymerase epsilon is a heterotetramer consisting of POL2, DPB2, DPB3 and DPB4.

Its subcellular location is the nucleus. In terms of biological role, as accessory component of the DNA polymerase epsilon (DNA polymerase II) participates in chromosomal DNA replication. It is required during synthesis of the leading and lagging DNA strands at the replication fork and binds at/or near replication origins and moves along DNA with the replication fork. It has 3'-5' proofreading exonuclease activity that correct errors arising during DNA replication. It is also involved in DNA synthesis during DNA repair. This Saccharomyces cerevisiae (strain ATCC 204508 / S288c) (Baker's yeast) protein is DNA polymerase epsilon subunit C (DPB3).